Reading from the N-terminus, the 961-residue chain is Aconitate hydratase A (961 aa).

Positions 499, 565, and 568 each coordinate [4Fe-4S] cluster.

The protein belongs to the aconitase/IPM isomerase family. In terms of assembly, monomer. [4Fe-4S] cluster serves as cofactor.

It catalyses the reaction citrate = D-threo-isocitrate. The enzyme catalyses (2S,3R)-3-hydroxybutane-1,2,3-tricarboxylate = 2-methyl-cis-aconitate + H2O. Its pathway is carbohydrate metabolism; tricarboxylic acid cycle; isocitrate from oxaloacetate: step 2/2. The protein operates within organic acid metabolism; propanoate degradation. Functionally, involved in the catabolism of short chain fatty acids (SCFA) via the tricarboxylic acid (TCA)(acetyl degradation route) and probably via the 2-methylcitrate cycle I (propionate degradation route). Catalyzes the reversible isomerization of citrate to isocitrate via cis-aconitate. The apo form of AcnA functions as a RNA-binding regulatory protein. Could catalyze the hydration of 2-methyl-cis-aconitate to yield (2R,3S)-2-methylisocitrate. The sequence is that of Aconitate hydratase A (acn) from Mycobacterium avium.